Consider the following 416-residue polypeptide: uncharacterized protein (416 aa).

The interval 341-360 (EDREKGSQHTNNTHHHKRNL) is disordered.

This is an uncharacterized protein from Human cytomegalovirus (strain AD169) (HHV-5).